A 310-amino-acid polypeptide reads, in one-letter code: Olfactory receptor 9A2 (310 aa).

Over 1-24 (MMDNHSSATEFHLLGFPGSQGLHH) the chain is Extracellular. Asn4 carries an N-linked (GlcNAc...) asparagine glycan. The helical transmembrane segment at 25–45 (ILFAIFFFFYLVTLMGNTVII) threads the bilayer. Topologically, residues 46 to 53 (VIVCVDKR) are cytoplasmic. Residues 54-74 (LQSPMYFFLSHLSTLEILVTT) traverse the membrane as a helical segment. Over 75-98 (IIVPMMLWGLLFLGCRQYLSLHVS) the chain is Extracellular. The Cytoplasmic portion of the chain corresponds to 117 to 135 (DRYVAVCNPLRYNIIMNSS). A helical membrane pass occupies residues 136–156 (TCIWVVIVSWVFGFLSEIWPI). Residues 157-193 (YATFQFTFRKSNSLDHFYCDRGQLLKLSCDNTLLTEF) lie on the Extracellular side of the membrane. The chain crosses the membrane as a helical span at residues 194-213 (ILFLMAVFILIGSLIPTIVS). The Cytoplasmic segment spans residues 214–233 (YTYIISTILKIPSASGRRKA). Residues 234–254 (FSTFASHFTCVVIGYGSCLFL) traverse the membrane as a helical segment. Topologically, residues 255 to 267 (YVKPKQTQGVEYN) are extracellular. The chain crosses the membrane as a helical span at residues 268–288 (KIVSLLVSVLTPFLNPFIFTL). Residues 289–310 (RNDKVKEALRDGMKRCCQLLKD) are Cytoplasmic-facing.

Belongs to the G-protein coupled receptor 1 family.

It is found in the cell membrane. Functionally, odorant receptor. This Homo sapiens (Human) protein is Olfactory receptor 9A2 (OR9A2).